The primary structure comprises 123 residues: uncharacterized protein (123 aa).

Residues 1–19 (MKIKYFFIPLFSSAILFSA) form the signal peptide. A lipid anchor (N-palmitoyl cysteine) is attached at C20. C20 carries the S-diacylglycerol cysteine lipid modification.

This sequence belongs to the MG439/MG440 family.

It is found in the cell membrane. This is an uncharacterized protein from Mycoplasma pneumoniae (strain ATCC 29342 / M129 / Subtype 1) (Mycoplasmoides pneumoniae).